We begin with the raw amino-acid sequence, 272 residues long: Zinc transporter ZupT (272 aa).

The next 8 helical transmembrane spans lie at 12–32 (ALAVTLAAGLATGLGSLMVVF), 40–60 (LLAFGLAFAGGAMVFVSLSEI), 76–96 (LGFTYGTLTFLGGMLLIMVID), 126–146 (LLTAVAITAHNFPEGLATFFA), 158–178 (AFAIAIHNIPEGIAIAVPVYF), 187–207 (FGASLLSGLAEPIGAGIGYLL), 211–231 (VLSEAVFGAVFGVIAGVMVFL), and 247–267 (HETVYGLVSGMGTLAISLVLF). 2 residues coordinate Fe(2+): asparagine 136 and glutamate 139. Zn(2+)-binding residues include glutamate 139 and histidine 164. Fe(2+) contacts are provided by asparagine 165, glutamate 168, and glutamate 197. Glutamate 168 is a Zn(2+) binding site.

The protein belongs to the ZIP transporter (TC 2.A.5) family. ZupT subfamily.

The protein resides in the cell inner membrane. The catalysed reaction is Zn(2+)(in) = Zn(2+)(out). In terms of biological role, mediates zinc uptake. May also transport other divalent cations. The protein is Zinc transporter ZupT of Xanthomonas campestris pv. campestris (strain ATCC 33913 / DSM 3586 / NCPPB 528 / LMG 568 / P 25).